A 79-amino-acid chain; its full sequence is Tungsten-containing formylmethanofuran dehydrogenase 2 subunit G (79 aa).

4Fe-4S ferredoxin-type domains lie at 2–31 and 51–79; these read VKIV…SPNV and TVSV…EIKT. The [4Fe-4S] cluster site is built by Cys11, Cys14, Cys17, Cys21, Cys60, Cys63, Cys66, and Cys70.

[4Fe-4S] cluster serves as cofactor.

It catalyses the reaction N-formylmethanofuran + 2 oxidized [2Fe-2S]-[ferredoxin] + H2O = methanofuran + 2 reduced [2Fe-2S]-[ferredoxin] + CO2 + H(+). The protein operates within one-carbon metabolism; methanogenesis from CO(2); 5,10-methenyl-5,6,7,8-tetrahydromethanopterin from CO(2): step 1/3. Not inactivated by cyanide. Its function is as follows. Catalyzes the reversible oxidation of CO(2) and methanofuran (MFR) to N-formylmethanofuran (CHO-MFR). This enzyme is oxygen-labile. May function as an electron transfer protein. The protein is Tungsten-containing formylmethanofuran dehydrogenase 2 subunit G (fwdG) of Methanopyrus kandleri (strain AV19 / DSM 6324 / JCM 9639 / NBRC 100938).